Reading from the N-terminus, the 506-residue chain is Histidine ammonia-lyase (506 aa).

A cross-link (5-imidazolinone (Ala-Gly)) is located at residues 144–146 (ASG). Residue Ser145 is modified to 2,3-didehydroalanine (Ser).

Belongs to the PAL/histidase family. Post-translationally, contains an active site 4-methylidene-imidazol-5-one (MIO), which is formed autocatalytically by cyclization and dehydration of residues Ala-Ser-Gly.

It localises to the cytoplasm. The catalysed reaction is L-histidine = trans-urocanate + NH4(+). It functions in the pathway amino-acid degradation; L-histidine degradation into L-glutamate; N-formimidoyl-L-glutamate from L-histidine: step 1/3. The polypeptide is Histidine ammonia-lyase (Legionella pneumophila (strain Paris)).